We begin with the raw amino-acid sequence, 354 residues long: Glutamine synthetase (354 aa).

The 80-residue stretch at 22–101 folds into the GS beta-grasp domain; that stretch reads IQAEYVWVDG…VLAETYNSDG (80 aa). The GS catalytic domain occupies 108-354; the sequence is FRHHAAKVME…IIVETTLLNA (247 aa).

This sequence belongs to the glutamine synthetase family. As to quaternary structure, homooctamer.

The protein resides in the cytoplasm. It carries out the reaction L-glutamate + NH4(+) + ATP = L-glutamine + ADP + phosphate + H(+). This Hebeloma cylindrosporum protein is Glutamine synthetase (GLN1).